A 491-amino-acid polypeptide reads, in one-letter code: 4,4'-diapolycopen-4-al dehydrogenase (491 aa).

Glu208 is an active-site residue.

Belongs to the carotenoid/retinoid oxidoreductase family. CrtN subfamily.

The catalysed reaction is all-trans-4,4'-diapolycopen-4-al + A + H2O = all-trans-4,4'-diapolycopen-4-oate + AH2 + H(+). It participates in carotenoid biosynthesis. Its function is as follows. Involved in the biosynthesis of the major C30 carotenoid methyl 4'-[6-O-(acylglycosyl)oxy]-4,4'-diapolycopen-4-oic acid via 4,4'-diapolycopen-4-oic acid intermediate. Catalyzes the oxidation of 4,4'-diapolycopen-4-al to yield 4,4'-diapolycopen-4-oic acid. In Metabacillus indicus (Bacillus indicus), this protein is 4,4'-diapolycopen-4-al dehydrogenase.